Here is a 445-residue protein sequence, read N- to C-terminus: uncharacterized protein (445 aa).

This is an uncharacterized protein from Xanthomonas euvesicatoria.